Consider the following 252-residue polypeptide: Carbohydrate deacetylase (252 aa).

Mg(2+)-binding residues include His-59 and His-122.

Belongs to the YdjC deacetylase family. Homodimer. The cofactor is Mg(2+).

Functionally, probably catalyzes the deacetylation of acetylated carbohydrates an important step in the degradation of oligosaccharides. This chain is Carbohydrate deacetylase, found in Vibrio cholerae serotype O1 (strain ATCC 39541 / Classical Ogawa 395 / O395).